A 279-amino-acid polypeptide reads, in one-letter code: Pantothenate synthetase (279 aa).

26-33 (MGNLHDGH) is an ATP binding site. His-33 serves as the catalytic Proton donor. Residue Gln-57 participates in (R)-pantoate binding. Beta-alanine is bound at residue Gln-57. 144 to 147 (GKKD) contacts ATP. A (R)-pantoate-binding site is contributed by Gln-150. Residue 181-184 (LSSR) participates in ATP binding.

The protein belongs to the pantothenate synthetase family. As to quaternary structure, homodimer.

The protein resides in the cytoplasm. It carries out the reaction (R)-pantoate + beta-alanine + ATP = (R)-pantothenate + AMP + diphosphate + H(+). The protein operates within cofactor biosynthesis; (R)-pantothenate biosynthesis; (R)-pantothenate from (R)-pantoate and beta-alanine: step 1/1. In terms of biological role, catalyzes the condensation of pantoate with beta-alanine in an ATP-dependent reaction via a pantoyl-adenylate intermediate. The sequence is that of Pantothenate synthetase from Herminiimonas arsenicoxydans.